Reading from the N-terminus, the 253-residue chain is Lys-63-specific deubiquitinase BRCC36 (253 aa).

The region spanning Val9 to Phe145 is the MPN domain. 3 residues coordinate Zn(2+): His94, His96, and Asp107. The JAMM motif signature appears at His94–Asp107. Residues Glu227–Lys249 adopt a coiled-coil conformation.

This sequence belongs to the peptidase M67A family. BRCC36 subfamily. As to quaternary structure, component of the BRISC complex, at least composed of ABRAXAS2, BRCC3/BRCC36, BABAM2 and BABAM1/NBA1. Within the complex, interacts directly with ABRAXAS2. The heterodimer with ABRAXAS2 assembles into a heterotetramer. The BRISC complex binds polyubiquitin. Requires Zn(2+) as cofactor.

Its subcellular location is the cytoplasm. It is found in the nucleus. It localises to the cytoskeleton. The protein resides in the spindle pole. In terms of biological role, metalloprotease that specifically cleaves 'Lys-63'-linked polyubiquitin chains, leaving the last ubiquitin chain attached to its substrates. Catalytic subunit of the BRISC complex; does not have activity by itself, but needs to be associated into a heterotetramer with ABRAXAS2 for minimal in vitro activity. Plays a role in regulating the onset of apoptosis via its role in modulating 'Lys-63'-linked ubiquitination of target proteins. Required for normal mitotic spindle assembly and microtubule attachment to kinetochores via its role in deubiquitinating spindle assembly factors. This is Lys-63-specific deubiquitinase BRCC36 from Camponotus floridanus (Florida carpenter ant).